We begin with the raw amino-acid sequence, 215 residues long: MYAVASIPFTDLGQVKKLIIKSAAAGADFVELRLDYWTRKETPPFLEMIELARNYGLDVIVTVRDPEEGGVWSPPWRGEAYEMASEAGAVCDVEVKKFKELPCDRAILSVHYFRKPPREGEVRKLSQRALEAGAWAFKVATVVTDFPSYFLLFSESVHPRTAFMPMGEGTEALRLASALLGSFLNYGSVGEATAPGQVSVRQLTKALSALGGRGD.

3-dehydroquinate contacts are provided by residues Ser6, 31-33 (ELR), and Arg64. His111 acts as the Proton donor/acceptor in catalysis. Lys138 acts as the Schiff-base intermediate with substrate in catalysis. Residues Arg174, Thr193, and Gln197 each contribute to the 3-dehydroquinate site.

The protein belongs to the type-I 3-dehydroquinase family. Homodimer.

It carries out the reaction 3-dehydroquinate = 3-dehydroshikimate + H2O. Its pathway is metabolic intermediate biosynthesis; chorismate biosynthesis; chorismate from D-erythrose 4-phosphate and phosphoenolpyruvate: step 3/7. Its function is as follows. Involved in the third step of the chorismate pathway, which leads to the biosynthesis of aromatic amino acids. Catalyzes the cis-dehydration of 3-dehydroquinate (DHQ) and introduces the first double bond of the aromatic ring to yield 3-dehydroshikimate. In Ignicoccus hospitalis (strain KIN4/I / DSM 18386 / JCM 14125), this protein is 3-dehydroquinate dehydratase.